The following is a 92-amino-acid chain: Small ribosomal subunit protein uS19 (92 aa).

This sequence belongs to the universal ribosomal protein uS19 family.

In terms of biological role, protein S19 forms a complex with S13 that binds strongly to the 16S ribosomal RNA. This is Small ribosomal subunit protein uS19 from Bifidobacterium longum subsp. infantis (strain ATCC 15697 / DSM 20088 / JCM 1222 / NCTC 11817 / S12).